The sequence spans 478 residues: Transcript termination protein A18 (478 aa).

The 157-residue stretch at 98–254 (KLSTHRPMYM…NDVVNVLKVS (157 aa)) folds into the Helicase ATP-binding domain. 111-118 (LSCGFGKT) contributes to the ATP binding site. The DESH box signature appears at 204–207 (DESH). The region spanning 302–468 (PRNNLIVETV…GIEGTKEEPV (167 aa)) is the Helicase C-terminal domain.

Belongs to the helicase family. Poxviruses subfamily. As to quaternary structure, interacts with G2. Might be part of a transcription complex composed at least of G2, A18, and H5.

The protein resides in the virion. Its function is as follows. DNA helicase which seems to act as a postreplicative transcription termination factor. Involved in ATP-dependent release of nascent RNA. Forms a stable complex with single-stranded DNA, and to a lesser extent RNA. The chain is Transcript termination protein A18 from Rabbit fibroma virus (strain Kasza) (RFV).